Here is a 213-residue protein sequence, read N- to C-terminus: Large ribosomal subunit protein uL3 (213 aa).

The protein belongs to the universal ribosomal protein uL3 family. As to quaternary structure, part of the 50S ribosomal subunit. Forms a cluster with proteins L14 and L19.

In terms of biological role, one of the primary rRNA binding proteins, it binds directly near the 3'-end of the 23S rRNA, where it nucleates assembly of the 50S subunit. In Petrotoga mobilis (strain DSM 10674 / SJ95), this protein is Large ribosomal subunit protein uL3.